Reading from the N-terminus, the 148-residue chain is Glutamate mutase sigma subunit 2 (148 aa).

Positions 1–134 (MRTVILGVIG…EALKADLGHR (134 aa)) constitute a B12-binding domain. Adenosylcob(III)alamin is bound by residues 11–15 (SDAHV), His14, 59–61 (SSL), and 90–94 (NLAVG). Residues 129 to 141 (ADLGHRSREEASS) show a composition bias toward basic and acidic residues. The segment at 129–148 (ADLGHRSREEASSEKVQLGS) is disordered.

It belongs to the methylaspartate mutase GlmS subunit family. Heterotetramer composed of 2 epsilon subunits (GlmE) and 2 sigma subunits (GlmS). GlmE exists as a homodimer and GlmS as a monomer. The cofactor is adenosylcob(III)alamin.

It catalyses the reaction (2S,3S)-3-methyl-L-aspartate = L-glutamate. It functions in the pathway amino-acid degradation; L-glutamate degradation via mesaconate pathway; acetate and pyruvate from L-glutamate: step 1/4. Its function is as follows. Catalyzes the carbon skeleton rearrangement of L-glutamate to L-threo-3-methylaspartate ((2S,3S)-3-methylaspartate). The protein is Glutamate mutase sigma subunit 2 of Haloarcula marismortui (strain ATCC 43049 / DSM 3752 / JCM 8966 / VKM B-1809) (Halobacterium marismortui).